A 1704-amino-acid polypeptide reads, in one-letter code: Phospholipid-transporting ATPase ABCA3 (1704 aa).

Asparagine 14 carries an N-linked (GlcNAc...) asparagine glycan. The chain crosses the membrane as a helical span at residues 22 to 42 (VLVTVLELFLPLLFSGILIWL). 4 N-linked (GlcNAc...) asparagine glycosylation sites follow: asparagine 53, asparagine 124, asparagine 140, and asparagine 228. The next 6 membrane-spanning stretches (helical) occupy residues 261–283 (YQLPLLLMLSFTYTSLTIIRAVV), 307–327 (AWFLMFFLFFLIVVSFMTLLF), 344–364 (SLVLAFLLCFAISSISFSFMV), 373–393 (IAAAVGGFLYFFTYTPYFFVA), 405–425 (LLSCLLSNVAMAMGAQLIGKF), and 447–467 (FCFGQVLGMLLLDSALYGLVT). In terms of domain architecture, ABC transporter 1 spans 530 to 763 (IKIKHLSKVF…YGAGYHMTLV (234 aa)). 566–573 (GHNGAGKT) serves as a coordination point for ATP. Asparagine 620 carries N-linked (GlcNAc...) asparagine glycosylation. A run of 7 helical transmembrane segments spans residues 925-945 (MVAAQVLVPLTCLTLALLAIH), 1100-1120 (IALNLLIAMAFLASTFSILAV), 1144-1164 (SALLWDLISFLVPSLLLLVVF), 1183-1203 (LLLMLYGWAIIPLMYLMSFFF), 1213-1233 (LTIFNILSGIATFIMVTIMRI), 1245-1265 (LDHVFLVLPNHCLGMAVSNFY), and 1310-1330 (MAASGGIYLTLLFLIETNLLW). The N-linked (GlcNAc...) asparagine glycan is linked to asparagine 1350. Residues 1381-1614 (LIINELSKVY…FGSGYSLQAK (234 aa)) enclose the ABC transporter 2 domain. Position 1416 to 1423 (1416 to 1423 (GFNGAGKT)) interacts with ATP.

Belongs to the ABC transporter superfamily. ABCA family. In terms of assembly, homooligomer; disulfide-linked. Post-translationally, N-glycosylated. Localization at intracellular vesicles is accompanied by processing of oligosaccharide from high mannose type to complex type. N-linked glycosylation at Asn-124 and Asn-140 is required for stability and efficient anterograde trafficking and prevents from proteasomal degradation. Proteolytically cleaved by CTSL and to a lower extent by CTSB within multivesicular bodies (MVB) and lamellar bodies (LB) leading to a mature form of 150 kDa. Highly expressed in the lung and moderately expressed in the kidney, adipose, macrophage, and spleen.

It localises to the endosome. Its subcellular location is the multivesicular body membrane. The protein localises to the cytoplasmic vesicle membrane. The protein resides in the late endosome membrane. It is found in the lysosome membrane. It catalyses the reaction a 1,2-diacyl-sn-glycero-3-phospho-(1'-sn-glycerol)(in) + ATP + H2O = a 1,2-diacyl-sn-glycero-3-phospho-(1'-sn-glycerol)(out) + ADP + phosphate + H(+). It carries out the reaction a 1,2-diacyl-sn-glycero-3-phosphocholine(in) + ATP + H2O = a 1,2-diacyl-sn-glycero-3-phosphocholine(out) + ADP + phosphate + H(+). The enzyme catalyses ATP + H2O + phospholipidSide 1 = ADP + phosphate + phospholipidSide 2.. The catalysed reaction is ATP + H2O + xenobioticSide 1 = ADP + phosphate + xenobioticSide 2.. It catalyses the reaction 1,2-dihexadecanoyl-sn-glycero-3-phosphocholine(in) + ATP + H2O = 1,2-dihexadecanoyl-sn-glycero-3-phosphocholine(out) + ADP + phosphate + H(+). It carries out the reaction cholesterol(in) + ATP + H2O = cholesterol(out) + ADP + phosphate + H(+). In terms of biological role, catalyzes the ATP-dependent transport of phospholipids such as phosphatidylcholine and phosphoglycerol from the cytoplasm into the lumen side of lamellar bodies, in turn participates in the lamellar bodies biogenesis and homeostasis of pulmonary surfactant. Transports preferentially phosphatidylcholine containing short acyl chains. In addition plays a role as an efflux transporter of miltefosine across macrophage membranes and free cholesterol (FC) through intralumenal vesicles by removing FC from the cell as a component of surfactant and protects cells from free cholesterol toxicity. The chain is Phospholipid-transporting ATPase ABCA3 (Abca3) from Mus musculus (Mouse).